We begin with the raw amino-acid sequence, 355 residues long: Uroporphyrinogen decarboxylase (355 aa).

Residues 36 to 40 (RQAGR), Asp-85, Tyr-160, Ser-215, and His-334 each bind substrate.

It belongs to the uroporphyrinogen decarboxylase family. In terms of assembly, homodimer.

Its subcellular location is the cytoplasm. It carries out the reaction uroporphyrinogen III + 4 H(+) = coproporphyrinogen III + 4 CO2. It functions in the pathway porphyrin-containing compound metabolism; protoporphyrin-IX biosynthesis; coproporphyrinogen-III from 5-aminolevulinate: step 4/4. Catalyzes the decarboxylation of four acetate groups of uroporphyrinogen-III to yield coproporphyrinogen-III. This chain is Uroporphyrinogen decarboxylase, found in Rhodococcus erythropolis (strain PR4 / NBRC 100887).